A 552-amino-acid polypeptide reads, in one-letter code: ATP synthase subunit alpha, mitochondrial (552 aa).

A mitochondrion-targeting transit peptide spans 1-47 (MSIFSARLASSVARNLPKAANQVACKAAYPAASLAARKLHVASTQRS). Residue 211 to 218 (GDRQTGKT) participates in ATP binding.

Belongs to the ATPase alpha/beta chains family. As to quaternary structure, F-type ATPases have 2 components, CF(1) - the catalytic core - and CF(0) - the membrane proton channel. CF(1) has five subunits: alpha(3), beta(3), gamma(1), delta(1), epsilon(1). CF(0) has three main subunits: a, b and c.

It localises to the mitochondrion inner membrane. Functionally, mitochondrial membrane ATP synthase (F(1)F(0) ATP synthase or Complex V) produces ATP from ADP in the presence of a proton gradient across the membrane which is generated by electron transport complexes of the respiratory chain. F-type ATPases consist of two structural domains, F(1) - containing the extramembraneous catalytic core, and F(0) - containing the membrane proton channel, linked together by a central stalk and a peripheral stalk. During catalysis, ATP synthesis in the catalytic domain of F(1) is coupled via a rotary mechanism of the central stalk subunits to proton translocation. Subunits alpha and beta form the catalytic core in F(1). Rotation of the central stalk against the surrounding alpha(3)beta(3) subunits leads to hydrolysis of ATP in three separate catalytic sites on the beta subunits. Subunit alpha does not bear the catalytic high-affinity ATP-binding sites. The protein is ATP synthase subunit alpha, mitochondrial (blw) of Drosophila melanogaster (Fruit fly).